We begin with the raw amino-acid sequence, 218 residues long: MAKKSVSVIAAKTAVHAAVLAPIALLGWQFWQVWQQGSDALGADPVAEIEHRTGLWALRLLLITLAITPLRQLTGQAVLIRFRRMLGLYTFFYASVHLTAYLWLDLRGFWTQIFEEIVKRPYITVGFTAWLLLVPLAITSTQGWMRRLKRNWGRLHMLIYPIGLLAVLHFWWLVKSDIREPALYAGILALLLGWRVWKRLSARRTTARHSAPPPATPR.

The next 5 membrane-spanning stretches (helical) occupy residues 14–34 (AVHA…WQVW), 60–80 (LLLI…AVLI), 86–106 (LGLY…WLDL), 121–141 (PYIT…ITST), and 155–175 (LHML…WLVK).

This sequence belongs to the MsrQ family. As to quaternary structure, heterodimer of a catalytic subunit (MsrP) and a heme-binding subunit (MsrQ). FMN serves as cofactor. Requires heme b as cofactor.

The protein resides in the cell inner membrane. In terms of biological role, part of the MsrPQ system that repairs oxidized periplasmic proteins containing methionine sulfoxide residues (Met-O), using respiratory chain electrons. Thus protects these proteins from oxidative-stress damage caused by reactive species of oxygen and chlorine generated by the host defense mechanisms. MsrPQ is essential for the maintenance of envelope integrity under bleach stress, rescuing a wide series of structurally unrelated periplasmic proteins from methionine oxidation. MsrQ provides electrons for reduction to the reductase catalytic subunit MsrP, using the quinone pool of the respiratory chain. The polypeptide is Protein-methionine-sulfoxide reductase heme-binding subunit MsrQ (Xanthomonas campestris pv. campestris (strain B100)).